Consider the following 345-residue polypeptide: Large ribosomal subunit protein uL4 (345 aa).

Position 2 is an N-acetylalanine (A2).

This sequence belongs to the universal ribosomal protein uL4 family.

The sequence is that of Large ribosomal subunit protein uL4 (rpl-4) from Caenorhabditis elegans.